The sequence spans 394 residues: G2/mitotic-specific cyclin-B2 (394 aa).

This sequence belongs to the cyclin family. Cyclin AB subfamily. Interacts with the CDK1 protein kinase to form a serine/threonine kinase holoenzyme complex also known as maturation promoting factor (MPF). The cyclin subunit imparts substrate specificity to the complex.

In terms of biological role, essential for the control of the cell cycle at the G2/M (mitosis) transition. In Anguilla japonica (Japanese eel), this protein is G2/mitotic-specific cyclin-B2 (ccnb2).